The chain runs to 334 residues: Glyceraldehyde-3-phosphate dehydrogenase (334 aa).

Residues 12-13 (RI), Asp35, Arg79, and Ser121 contribute to the NAD(+) site. D-glyceraldehyde 3-phosphate is bound by residues 152–154 (SCT), Thr183, Arg198, 211–212 (TG), and Arg234. The active-site Nucleophile is the Cys153. NAD(+) is bound at residue Asn315.

Belongs to the glyceraldehyde-3-phosphate dehydrogenase family. In terms of assembly, homotetramer.

It localises to the cytoplasm. It carries out the reaction D-glyceraldehyde 3-phosphate + phosphate + NAD(+) = (2R)-3-phospho-glyceroyl phosphate + NADH + H(+). It functions in the pathway carbohydrate degradation; glycolysis; pyruvate from D-glyceraldehyde 3-phosphate: step 1/5. In terms of biological role, catalyzes the oxidative phosphorylation of glyceraldehyde 3-phosphate (G3P) to 1,3-bisphosphoglycerate (BPG) using the cofactor NAD. The first reaction step involves the formation of a hemiacetal intermediate between G3P and a cysteine residue, and this hemiacetal intermediate is then oxidized to a thioester, with concomitant reduction of NAD to NADH. The reduced NADH is then exchanged with the second NAD, and the thioester is attacked by a nucleophilic inorganic phosphate to produce BPG. The sequence is that of Glyceraldehyde-3-phosphate dehydrogenase (gap) from Corynebacterium glutamicum (strain ATCC 13032 / DSM 20300 / JCM 1318 / BCRC 11384 / CCUG 27702 / LMG 3730 / NBRC 12168 / NCIMB 10025 / NRRL B-2784 / 534).